We begin with the raw amino-acid sequence, 311 residues long: 5'-adenylylsulfate reductase-like 3 (311 aa).

An N-terminal signal peptide occupies residues 1–22; sequence MATRLLCWTALLLPIIAATAAA. The region spanning 23–164 is the Thioredoxin domain; sequence SPLPEACPVP…LAAFYRDVSG (142 aa). A glycan (N-linked (GlcNAc...) asparagine) is linked at Asn-139. Residues 210-230 form a helical membrane-spanning segment; that stretch reads LALATAFVILRLLYLLFPKIG. N-linked (GlcNAc...) asparagine glycosylation is found at Asn-281 and Asn-305.

It is found in the membrane. This is 5'-adenylylsulfate reductase-like 3 (APRL3) from Oryza sativa subsp. japonica (Rice).